Reading from the N-terminus, the 447-residue chain is Phosphoglucosamine mutase (447 aa).

The active-site Phosphoserine intermediate is the serine 102. Serine 102, aspartate 241, aspartate 243, and aspartate 245 together coordinate Mg(2+). Serine 102 carries the post-translational modification Phosphoserine.

Belongs to the phosphohexose mutase family. It depends on Mg(2+) as a cofactor. In terms of processing, activated by phosphorylation.

The catalysed reaction is alpha-D-glucosamine 1-phosphate = D-glucosamine 6-phosphate. In terms of biological role, catalyzes the conversion of glucosamine-6-phosphate to glucosamine-1-phosphate. The protein is Phosphoglucosamine mutase of Symbiobacterium thermophilum (strain DSM 24528 / JCM 14929 / IAM 14863 / T).